Here is a 237-residue protein sequence, read N- to C-terminus: Ribonuclease PH (237 aa).

Residues R86 and 124–126 (GTR) each bind phosphate.

The protein belongs to the RNase PH family. As to quaternary structure, homohexameric ring arranged as a trimer of dimers.

It carries out the reaction tRNA(n+1) + phosphate = tRNA(n) + a ribonucleoside 5'-diphosphate. Phosphorolytic 3'-5' exoribonuclease that plays an important role in tRNA 3'-end maturation. Removes nucleotide residues following the 3'-CCA terminus of tRNAs; can also add nucleotides to the ends of RNA molecules by using nucleoside diphosphates as substrates, but this may not be physiologically important. Probably plays a role in initiation of 16S rRNA degradation (leading to ribosome degradation) during starvation. This is Ribonuclease PH from Shewanella sp. (strain W3-18-1).